A 207-amino-acid chain; its full sequence is 8-oxoguanine DNA glycosylase/AP lyase (207 aa).

Active-site residues include K129 and D147.

The protein belongs to the type-2 OGG1 family.

It carries out the reaction 2'-deoxyribonucleotide-(2'-deoxyribose 5'-phosphate)-2'-deoxyribonucleotide-DNA = a 3'-end 2'-deoxyribonucleotide-(2,3-dehydro-2,3-deoxyribose 5'-phosphate)-DNA + a 5'-end 5'-phospho-2'-deoxyribonucleoside-DNA + H(+). Catalyzes the excision of an oxidatively damaged form of guanine (7,8-dihydro-8-oxoguanine = 8-oxoG) from DNA. Also cleaves the DNA backbone at apurinic/apyrimidinic sites (AP sites). Has little specificity for the base opposite oxoG. The sequence is that of 8-oxoguanine DNA glycosylase/AP lyase from Methanocaldococcus jannaschii (strain ATCC 43067 / DSM 2661 / JAL-1 / JCM 10045 / NBRC 100440) (Methanococcus jannaschii).